Here is a 233-residue protein sequence, read N- to C-terminus: Large ribosomal subunit protein uL1 (233 aa).

Belongs to the universal ribosomal protein uL1 family. As to quaternary structure, part of the 50S ribosomal subunit.

In terms of biological role, binds directly to 23S rRNA. The L1 stalk is quite mobile in the ribosome, and is involved in E site tRNA release. Protein L1 is also a translational repressor protein, it controls the translation of the L11 operon by binding to its mRNA. The protein is Large ribosomal subunit protein uL1 of Polynucleobacter necessarius subsp. necessarius (strain STIR1).